The chain runs to 588 residues: Zinc finger protein 599 (588 aa).

Residues 9–80 form the KRAB domain; that stretch reads VSFEDVVVTF…KRGLSQSTCA (72 aa). 14 C2H2-type zinc fingers span residues 199-221, 227-249, 255-277, 283-305, 311-333, 339-361, 367-389, 395-417, 423-445, 451-473, 479-501, 507-529, 535-557, and 563-585; these read YTCT…QQIH, YECN…MRLH, YKCI…QRIH, YECK…NMTH, FLCK…MRIH, YECG…NVTH, YECG…KRTH, FECK…MRIH, YECS…NRTH, LECK…MRIH, YVCR…NRIH, FECK…MRTH, and FECN…RKIH.

The protein belongs to the krueppel C2H2-type zinc-finger protein family.

It localises to the nucleus. May be involved in transcriptional regulation. This chain is Zinc finger protein 599 (ZNF599), found in Homo sapiens (Human).